A 173-amino-acid chain; its full sequence is Siroheme decarboxylase alpha subunit (173 aa).

His115 and Arg119 together coordinate substrate.

Belongs to the Ahb/Nir family. In terms of assembly, forms a heterodimer composed of AhbA and AhbB.

The catalysed reaction is siroheme + 2 H(+) = 12,18-didecarboxysiroheme + 2 CO2. The protein operates within porphyrin-containing compound metabolism; protoheme biosynthesis. Involved in siroheme-dependent heme b biosynthesis. Catalyzes the decarboxylation of siroheme into didecarboxysiroheme. Siroheme is decarboxylated to monodecarboxysiroheme, which is in turn decarboxylated to didecarboxysiroheme. The protein is Siroheme decarboxylase alpha subunit of Desulfovibrio desulfuricans (strain ATCC 27774 / DSM 6949 / MB).